A 133-amino-acid polypeptide reads, in one-letter code: Salivary cystatin-L2 (133 aa).

The signal sequence occupies residues 1-18 (MTSSLALVLLLGGAAVCA). Residues 34-118 (DDPKYLELAH…RTCTAVIYEN (85 aa)) form the Cystatin domain.

It belongs to the cystatin family. As to expression, salivary gland, midgut and other tissues.

Its subcellular location is the secreted. Its function is as follows. Inhibitor of cysteine proteinases. Inhibits host cathepsin L (CTSL) and S (CTSS). Modulates production of various cytokines and chemokines in lipopolysaccharide (LPS)-stimulated mouse dendritic cell. Suppresses maturation of mouse bone-marrow-derived dendritic cells (BMDCs). In terms of biological role, (Microbial infection) Modulates Borrelia miyamotoi-stimulated immune responses in mice by suppressing activities of host dendritic and T-cells. The chain is Salivary cystatin-L2 from Ixodes persulcatus (Taiga tick).